Here is a 155-residue protein sequence, read N- to C-terminus: Large ribosomal subunit protein uL13 (155 aa).

The protein belongs to the universal ribosomal protein uL13 family. In terms of assembly, part of the 50S ribosomal subunit.

Functionally, this protein is one of the early assembly proteins of the 50S ribosomal subunit, although it is not seen to bind rRNA by itself. It is important during the early stages of 50S assembly. This chain is Large ribosomal subunit protein uL13, found in Rickettsia rickettsii (strain Iowa).